We begin with the raw amino-acid sequence, 96 residues long: Small ribosomal subunit protein bS16 (96 aa).

Belongs to the bacterial ribosomal protein bS16 family.

The chain is Small ribosomal subunit protein bS16 from Anaplasma phagocytophilum (strain HZ).